The primary structure comprises 251 residues: DNA repair protein RecO (251 aa).

It belongs to the RecO family.

Involved in DNA repair and RecF pathway recombination. This Acetivibrio thermocellus (strain ATCC 27405 / DSM 1237 / JCM 9322 / NBRC 103400 / NCIMB 10682 / NRRL B-4536 / VPI 7372) (Clostridium thermocellum) protein is DNA repair protein RecO.